A 160-amino-acid polypeptide reads, in one-letter code: Small ribosomal subunit protein uS7 (160 aa).

The protein belongs to the universal ribosomal protein uS7 family. Part of the 30S ribosomal subunit. Contacts proteins S9 and S11.

Functionally, one of the primary rRNA binding proteins, it binds directly to 16S rRNA where it nucleates assembly of the head domain of the 30S subunit. Is located at the subunit interface close to the decoding center, probably blocks exit of the E-site tRNA. This chain is Small ribosomal subunit protein uS7, found in Rickettsia typhi (strain ATCC VR-144 / Wilmington).